A 180-amino-acid polypeptide reads, in one-letter code: Endothelin-2 (180 aa).

Residues 1-26 (MVALPTAWCSVALALLVALHEGKSQS) form the signal peptide. A propeptide spanning residues 27–47 (AATSEEPPAPSARARGSHLRL) is cleaved from the precursor. Intrachain disulfides connect Cys-50/Cys-64 and Cys-52/Cys-60. The propeptide occupies 71–180 (VNTPGQTAPY…ESSHSRWRKR (110 aa)). The endothelin-like stretch occupies residues 97–112 (CECYSTRDSACVTFCH). A disordered region spans residues 157 to 180 (NFTRHQQQKATREPESSHSRWRKR).

The protein belongs to the endothelin/sarafotoxin family.

It is found in the secreted. Endothelins are endothelium-derived vasoconstrictor peptides. This is Endothelin-2 (EDN2) from Atelerix albiventris (Middle-African hedgehog).